The following is a 436-amino-acid chain: Trigger factor (436 aa).

Residues 163 to 248 (GDRATIDFEG…VKKIEAAHLP (86 aa)) enclose the PPIase FKBP-type domain.

This sequence belongs to the FKBP-type PPIase family. Tig subfamily.

The protein localises to the cytoplasm. The catalysed reaction is [protein]-peptidylproline (omega=180) = [protein]-peptidylproline (omega=0). Functionally, involved in protein export. Acts as a chaperone by maintaining the newly synthesized protein in an open conformation. Functions as a peptidyl-prolyl cis-trans isomerase. This is Trigger factor from Polaromonas sp. (strain JS666 / ATCC BAA-500).